Here is a 235-residue protein sequence, read N- to C-terminus: MKNLLKLSAIAILAASAVSTFASNKEPYTEQGTNAREMTEQKPIHWISVEQLKKELEGKAPINVSFDIDDTVLFSSPCFYHGQEKYSPGKNDYLKNQDFWNEVNAGCDQYSIPKQIAVDLINMHQARGDQIYFITGRTAGDKDGVTPVLQKAFNIKDMHPVEFMGGRKLPTKYNKTPGIIEHKVSIHYGDSDDDILAAKEAGIRGIRLMRAANSTYQPMPTLGGYGEEVLINSNY.

The first 22 residues, 1 to 22 (MKNLLKLSAIAILAASAVSTFA), serve as a signal peptide directing secretion. D67 functions as the Nucleophile in the catalytic mechanism. Residues D67 and D69 each coordinate Mg(2+). D69 serves as the catalytic Proton donor. Substrate is bound by residues 135–136 (TG) and K175. D190 contacts Mg(2+).

This sequence belongs to the class B bacterial acid phosphatase family. As to quaternary structure, homotetramer. The cofactor is Mg(2+).

The protein localises to the periplasm. It carries out the reaction a phosphate monoester + H2O = an alcohol + phosphate. Functionally, dephosphorylates several organic phosphate monoesters. Also has a phosphotransferase activity catalyzing the transfer of low-energy phosphate groups from organic phosphate monoesters to free hydroxyl groups of various organic compounds. The chain is Class B acid phosphatase from Haemophilus parainfluenzae (strain T3T1).